The primary structure comprises 298 residues: tRNA dimethylallyltransferase (298 aa).

Glycine 16 to serine 23 is a binding site for ATP. Threonine 18–serine 23 lines the substrate pocket. Interaction with substrate tRNA stretches follow at residues aspartate 41–glutamine 44 and glutamine 165–arginine 169.

Belongs to the IPP transferase family. As to quaternary structure, monomer. Mg(2+) is required as a cofactor.

The enzyme catalyses adenosine(37) in tRNA + dimethylallyl diphosphate = N(6)-dimethylallyladenosine(37) in tRNA + diphosphate. Catalyzes the transfer of a dimethylallyl group onto the adenine at position 37 in tRNAs that read codons beginning with uridine, leading to the formation of N6-(dimethylallyl)adenosine (i(6)A). This chain is tRNA dimethylallyltransferase, found in Rhizobium rhizogenes (strain K84 / ATCC BAA-868) (Agrobacterium radiobacter).